Here is a 232-residue protein sequence, read N- to C-terminus: Protein INAPERTURATE POLLEN 1 homolog (232 aa).

Interacts with LECRKS7/DAF1.

It is found in the cytoplasm. Its function is as follows. Required for pollen aperture formation, male fertility and LECRKS7/DAF1 function. Seems to be involved in operculum protrusion. Participates in the modification of plasma membrane at future aperture sites, possibly by creating close contact between the plasma membrane and callose wall to prevent primexine formation and sporopollenin deposition. This Oryza sativa subsp. japonica (Rice) protein is Protein INAPERTURATE POLLEN 1 homolog.